The chain runs to 515 residues: MKKSAWGLVDAFFDKYDLVDHHIHSYNDFVSNRIQEIIDTSEPIELEQGQYTVETGKVTIEKPFIKEADGSKSKIYPTEARLRNLTYSAHMSLEMRLLKEGGSETEFEKVHIGELPVMLKSEICHLHGLGRDELIEKGEDPADLGGYFIVNASERSIVTMEEIAPNKIILERIGEEDEKRARAIVTSIRSGFRARISLEYRKPRKTGVFLRISFPYVPGELPLVILLRALGLATDQEIITSISDDFNYQMIAADDIQVSLDKLKLDSDKMEEEMDEEERREYLIRSAIKYIGNRVAKGMTEDYRIKRAEDVIDRYLLPHIGTEPDKRLEKAVYLAEMTEMLLQVISGERKPHDKDHYTNKRLRVSGDLMEDLFRVAFTSLTRDMSYRLERSLARGKEPSVKQAVRSDVLSENLKHAIATGNWVGGRAGVSQLLDRTSYMGTLSHMRRVVSPLSRSQPHFEARDLHPTQFGKICPNETPESPNCGLVKNLALMAKISEGSDPDEIEEVIKKMGVIN.

Belongs to the RNA polymerase beta chain family. In terms of assembly, part of the RNA polymerase complex.

Its subcellular location is the cytoplasm. It catalyses the reaction RNA(n) + a ribonucleoside 5'-triphosphate = RNA(n+1) + diphosphate. Its function is as follows. DNA-dependent RNA polymerase (RNAP) catalyzes the transcription of DNA into RNA using the four ribonucleoside triphosphates as substrates. The Rpo2 subunit (Rpo2N and Rpo2C in this organism) is implicated in DNA promoter recognition and in nucleotide binding. The protein is DNA-directed RNA polymerase subunit Rpo2N of Methanothermobacter thermautotrophicus (strain Winter) (Methanobacterium thermoautotrophicum).